Here is a 652-residue protein sequence, read N- to C-terminus: Potassium voltage-gated channel subfamily KQT member 1 (652 aa).

Topologically, residues 1–110 are cytoplasmic; the sequence is MSSEQPAWTF…YNFLERPTGW (110 aa). A helical transmembrane segment spans residues 111–132; sequence KCFVYHFTVFLIVLICLIFSVL. The Extracellular portion of the chain corresponds to 133–143; the sequence is STIQQYNNLAT. A helical membrane pass occupies residues 144–166; that stretch reads ETLFWMEIVLVVFFGAEYVVRLW. At 167–182 the chain is on the cytoplasmic side; sequence SAGCRSKYVGVWGRLR. The helical transmembrane segment at 183–208 threads the bilayer; it reads FARKPISVIDLIVVVASVIVLCVGSN. Residues 209 to 216 are Extracellular-facing; the sequence is GQVFATSA. The helical; Voltage-sensor transmembrane segment at 217 to 232 threads the bilayer; that stretch reads IRGIRFLQILRMLHVD. The interaction with KCNE3 stretch occupies residues 228–236; it reads MLHVDRQGG. The Cytoplasmic portion of the chain corresponds to 233 to 250; sequence RQGGTWRLLGSVVFIHRQ. Glutamine 234 contacts a 1,2-diacyl-sn-glycero-3-phospho-(1D-myo-inositol-4,5-bisphosphate). The chain crosses the membrane as a helical span at residues 251–273; that stretch reads ELITTLYIGFLGLIFSSYFVYLA. Residues 274–289 are Extracellular-facing; the sequence is EKDAIDSSGEYQFGSY. The segment at residues 290-310 is an intramembrane region (pore-forming); sequence ADALWWGVVTVTTIGYGDKVP. The Extracellular portion of the chain corresponds to 311-312; it reads QT. A helical transmembrane segment spans residues 313 to 338; it reads WIGKTIASCFSVFAISFFALPAGILG. The Cytoplasmic portion of the chain corresponds to 339–652; that stretch reads SGFALKVQQK…VPRMTQDNIS (314 aa). Residues 360 to 372 form an interaction with CALM region; the sequence is AAASLIQTAWRCY. The disordered stretch occupies residues 393-419; the sequence is HHLMSPSPKPKKSAMVKKKKIRTERDE. The segment covering 401 to 414 has biased composition (basic residues); it reads KPKKSAMVKKKKIR. The interaction with CALM; calcium-dependent stretch occupies residues 504–518; sequence KVIRRMQYFVAKKKF. Positions 524 to 561 are interaction with KCNE1 C-terminus; it reads PYDVRDVIEQYSQGHLNLMVRIKELQRRLDQSLGKPSL. Positions 577–605 are interaction with AKAP9; that stretch reads IGSRLNRVEDKVTQMDHKLNLITDMLHHL. A C-terminal assembly domain (tetramerization) region spans residues 578–609; it reads GSRLNRVEDKVTQMDHKLNLITDMLHHLLTNQ. The interval 609-652 is disordered; it reads QQGSQSIRTPHRSNSLNSENHPSRNTLPTYEQLNVPRMTQDNIS.

The protein belongs to the potassium channel family. KQT (TC 1.A.1.15) subfamily. Kv7.1/KCNQ1 sub-subfamily. As to quaternary structure, tetramer. Heterotetramer with KCNE1; targets to the membrane raft. Interacts (via C-terminus) with CALM; forms a heterotetramer in a calcium-independent manner. Interacts with KCNE2; form a heterooligomer complex that targets to the membrane raft and leading to currents with an apparently instantaneous activation, a rapid deactivation process and a linear current-voltage relationship and decreases the amplitude of the outward current. Interacts with KCNE3; four KCNE3 molecules are bound to one KCNQ1 tetramer (4:4 KCNQ1:KCNE3 stoichiometry); alters membrane raft localization; affects KCNQ1 structure and gating properties. Interacts with KCNE4; impairs KCNQ1 localization in lipid rafts and inhibits voltage-gated potassium channel activity. Interacts with KCNE5; impairs KCNQ1 localization in lipid rafts and only conducts current upon strong and continued depolarization.

The protein resides in the cell membrane. It is found in the cytoplasmic vesicle membrane. The protein localises to the membrane raft. Its subcellular location is the endoplasmic reticulum. It localises to the basolateral cell membrane. It carries out the reaction K(+)(in) = K(+)(out). With respect to regulation, PIP2 molecule is essential to activate KCNQ channels by inducing the coupling of the voltage-sensing domain (VSD) and the pore-forming domain (PD). Upon channel activation, PIP2 disrupts the VSD-calmodulin/CALM interactions, causing the release of CALM from the VSD which triggers the opening of the gate. Calcium potentiates KCNQ1 channel current through calcium-bound CALM. Calcium-bound CALM competes with PIP2 to stabilize the channel open state. In terms of biological role, pore-forming subunit of the voltage-gated potassium (Kv) channel involved in the regulation of cardiomyocyte excitability and important in normal development and functions of myocardium, inner ear, stomach and colon. Associates with KCNE beta subunits that modulates current kinetics. Induces a voltage-dependent by rapidly activating and slowly deactivating potassium-selective outward current. Also promotes a delayed voltage activated potassium current showing outward rectification characteristic. During beta-adrenergic receptor stimulation participates in cardiac repolarization by associating with KCNE1 to form the I(Ks) cardiac potassium current that increases the amplitude and slows down the activation kinetics of outward potassium current I(Ks). When associated with KCNE3, forms the potassium channel that is important for cyclic AMP-stimulated intestinal secretion of chloride ions. When associated with KCNE2, forms a heterooligomer complex leading to currents with an apparently instantaneous activation, a rapid deactivation process and a linear current-voltage relationship and decreases the amplitude of the outward current. When associated with KCNE4, inhibits voltage-gated potassium channel activity. When associated with KCNE5, this complex only conducts current upon strong and continued depolarization. This chain is Potassium voltage-gated channel subfamily KQT member 1, found in Xenopus laevis (African clawed frog).